Here is a 549-residue protein sequence, read N- to C-terminus: Tight junction-associated protein 1 (549 aa).

The disordered stretch occupies residues 1–34 (MSSAAPAKKPYRKAPPEHRELRLEIPVSRLEQEE). Residues 14–23 (APPEHRELRL) are compositionally biased toward basic and acidic residues. Positions 42–171 (MKLLQQENEE…EELNERYRLD (130 aa)) form a coiled coil. 2 disordered regions span residues 207 to 226 (RSGQ…LSPG) and 266 to 322 (VDMS…PLYP). A Phosphoserine modification is found at Ser-295. The span at 311–320 (YPTPSPPHPL) shows a compositional bias: pro residues. Position 313 is a phosphothreonine (Thr-313). A phosphoserine mark is found at Ser-315 and Ser-340. 3 disordered regions span residues 359–404 (EDGS…SEED), 410–429 (QRAF…RTAF), and 434–549 (LPEL…TVLS). Residues 369 to 383 (SVPSSPASAQGSPHH) are compositionally biased toward polar residues. Over residues 389–400 (PSALSAPASSAS) the composition is skewed to low complexity. Thr-417 bears the Phosphothreonine mark. Ser-483 carries the phosphoserine modification. Positions 485 to 498 (EEERQSLLPDKEGT) are enriched in basic and acidic residues. Over residues 522-534 (RSPKRMGVHHLHR) the composition is skewed to basic residues. Ser-537 is modified (phosphoserine). The span at 538 to 549 (LTQAQEQGTVLS) shows a compositional bias: polar residues.

Interacts with DLG1. Interacts with ARF6 (GTP-bound form). In terms of tissue distribution, widely expressed including in adult thymus, heart, lung, liver, small intestine, kidney, spleen, testis and skeletal muscle and in embryonic brain but not detected in adult brain (at protein level).

Its subcellular location is the golgi apparatus. The protein localises to the trans-Golgi network. It is found in the cell junction. It localises to the tight junction. The protein resides in the cell membrane. Functionally, plays a role in regulating the structure of the Golgi apparatus. The chain is Tight junction-associated protein 1 from Mus musculus (Mouse).